We begin with the raw amino-acid sequence, 321 residues long: High osmolarity signaling protein SHO1A (321 aa).

Topologically, residues 1–28 (MDYNNNRYGGGGGGSKFNLGHIVGDPFS) are cytoplasmic. A helical transmembrane segment spans residues 29 to 49 (LATIAIATAGWLIAFVSSIIA). At 50–58 (NIDQEYPNY) the chain is on the extracellular side. A glycan (N-linked (GlcNAc...) asparagine) is linked at asparagine 57. A helical membrane pass occupies residues 59–79 (SWWALAYMFFVILGVTFAVAA). Asparagine 80 is a topological domain (cytoplasmic). The chain crosses the membrane as a helical span at residues 81 to 101 (AVYTYHVAMVGFLAAGLVFTT). Residues 102–116 (SSVNSLIYWSDKAKQ) are Extracellular-facing. The helical transmembrane segment at 117–137 (AAAAGFILLSMVSIVWIFYFG) threads the bilayer. Topologically, residues 138–321 (SQPTASHRQT…IAPSNYLILL (184 aa)) are cytoplasmic. Disordered regions lie at residues 155–181 (KDHA…AQHP) and 194–261 (TSSP…QQPT). Polar residues-rich tracts occupy residues 165-181 (HMTQ…AQHP) and 225-237 (NFSN…PITS). Residues 238 to 249 (QNNPQNQHQQPQ) show a composition bias toward low complexity. A compositionally biased stretch (polar residues) spans 250 to 261 (DLTSPSTTQQPT). The SH3 domain maps to 262-321 (EYPYRAKAIYSYEANPDDANEISFNKHEILEVSDVSGRWWQAKKENGETGIAPSNYLILL).

This sequence belongs to the SHO1 family. As to quaternary structure, forms homooligomers.

Its subcellular location is the cell membrane. In terms of biological role, plasma membrane osmosensor that activates the high osmolarity glycerol (HOG) MAPK signaling pathway in response to high osmolarity. This Hortaea werneckii protein is High osmolarity signaling protein SHO1A (SHO1A).